We begin with the raw amino-acid sequence, 690 residues long: Glutamate--cysteine ligase (690 aa).

Composition is skewed to low complexity over residues 574-585 and 598-619; these read QQQNGHVNNNNN and NGST…TNGT. The tract at residues 574-620 is disordered; sequence QQQNGHVNNNNNNDKKTKNDPIIVNGSTTTTNGTNSGSGITETNGTM.

This sequence belongs to the glutamate--cysteine ligase type 3 family.

The enzyme catalyses L-cysteine + L-glutamate + ATP = gamma-L-glutamyl-L-cysteine + ADP + phosphate + H(+). Its pathway is sulfur metabolism; glutathione biosynthesis; glutathione from L-cysteine and L-glutamate: step 1/2. This Candida albicans (Yeast) protein is Glutamate--cysteine ligase (GCS1).